The sequence spans 1163 residues: Pesticidal crystal protein Cry26Aa (1163 aa).

It belongs to the delta endotoxin family.

In terms of biological role, promotes colloidosmotic lysis by binding to the midgut epithelial cells of insects. The polypeptide is Pesticidal crystal protein Cry26Aa (cry26Aa) (Bacillus thuringiensis subsp. finitimus).